The primary structure comprises 214 residues: MILILLGPPGAGKGTQAKLLSSELGIPHISTGDMFRDHKARGTEIGKQVQAIMDAGGLVTDDITNAMVKERLSRPDVAPGFILDGYPRTVVQAEYLDGLLRSLGRSIDRALSYEVPEELVVERISGRRSCPRCGAVYHVSQNPPHRAGFCDRDDAALVQREDDKPENVRKRMQEYGTKTEPLKRYYRDRGELSDVEGVGTPEGILAVTKKVLGR.

Residue 10 to 15 (GAGKGT) coordinates ATP. Residues 30-59 (STGDMFRDHKARGTEIGKQVQAIMDAGGLV) form an NMP region. AMP contacts are provided by residues threonine 31, arginine 36, 57-59 (GLV), 85-88 (GYPR), and glutamine 92. Positions 126 to 163 (GRRSCPRCGAVYHVSQNPPHRAGFCDRDDAALVQREDD) are LID. Arginine 127 serves as a coordination point for ATP. 2 residues coordinate Zn(2+): cysteine 130 and cysteine 133. 136 to 137 (VY) contacts ATP. Zn(2+) contacts are provided by cysteine 150 and aspartate 153. 2 residues coordinate AMP: arginine 160 and arginine 171. Residue glycine 199 participates in ATP binding.

This sequence belongs to the adenylate kinase family. In terms of assembly, monomer.

The protein localises to the cytoplasm. It catalyses the reaction AMP + ATP = 2 ADP. Its pathway is purine metabolism; AMP biosynthesis via salvage pathway; AMP from ADP: step 1/1. Catalyzes the reversible transfer of the terminal phosphate group between ATP and AMP. Plays an important role in cellular energy homeostasis and in adenine nucleotide metabolism. This chain is Adenylate kinase, found in Anaeromyxobacter dehalogenans (strain 2CP-1 / ATCC BAA-258).